The chain runs to 427 residues: Adenylosuccinate synthetase (427 aa).

GTP contacts are provided by residues 12 to 18 (GDEGKGK) and 40 to 42 (GHT). Asp13 functions as the Proton acceptor in the catalytic mechanism. Asp13 and Gly40 together coordinate Mg(2+). Residues 13 to 16 (DEGK), 38 to 41 (NAGH), Thr128, Arg142, Gln223, Thr238, and Arg302 each bind IMP. His41 (proton donor) is an active-site residue. 298–304 (TTTGRPR) serves as a coordination point for substrate. GTP-binding positions include Arg304, 330-332 (LLD), and 412-414 (SVG).

This sequence belongs to the adenylosuccinate synthetase family. In terms of assembly, homodimer. Mg(2+) is required as a cofactor.

It localises to the cytoplasm. The catalysed reaction is IMP + L-aspartate + GTP = N(6)-(1,2-dicarboxyethyl)-AMP + GDP + phosphate + 2 H(+). The protein operates within purine metabolism; AMP biosynthesis via de novo pathway; AMP from IMP: step 1/2. Its function is as follows. Plays an important role in the de novo pathway of purine nucleotide biosynthesis. Catalyzes the first committed step in the biosynthesis of AMP from IMP. The protein is Adenylosuccinate synthetase of Alkaliphilus metalliredigens (strain QYMF).